Here is a 241-residue protein sequence, read N- to C-terminus: NEP1-interacting protein 2 (241 aa).

Positions methionine 1–serine 20 are disordered. Over methionine 1–histidine 36 the chain is Lumenal, thylakoid. The helical transmembrane segment at phenylalanine 37 to leucine 57 threads the bilayer. At valine 58–serine 76 the chain is on the stromal side. A helical transmembrane segment spans residues glycine 77–phenylalanine 97. The Lumenal, thylakoid portion of the chain corresponds to glutamate 98 to serine 109. The chain crosses the membrane as a helical span at residues glycine 110–valine 130. Residues arginine 131–isoleucine 241 are Stromal-facing. The RING-type; atypical zinc-finger motif lies at cysteine 196–arginine 238.

This sequence belongs to the RING-type zinc finger family. NIP subfamily. As to quaternary structure, interacts with RPOT2.

Its subcellular location is the plastid. The protein localises to the chloroplast thylakoid membrane. Intrinsic thylakoid membrane protein that fixes RPOT2 on the stromal side of the thylakoid membrane. The chain is NEP1-interacting protein 2 (NIP2) from Arabidopsis thaliana (Mouse-ear cress).